The chain runs to 853 residues: Thrombospondin type-1 domain-containing protein 1 (853 aa).

An N-terminal signal peptide occupies residues 1–24 (MKPMLKDFSNLLLVVLCDYVLGEA). The Extracellular segment spans residues 25–414 (EYLLLREPGH…QPQGPVKSNN (390 aa)). Residues N39, N53, N58, N69, N80, N135, and N304 are each glycosylated (N-linked (GlcNAc...) asparagine). In terms of domain architecture, TSP type-1 spans 341–394 (IETWGLWQPWSQCSATCGDGVRERRRVCLTSFPSRPGCPGMSLEASLCSLEECA). Intrachain disulfides connect C353/C388, C357/C393, and C368/C378. The chain crosses the membrane as a helical span at residues 415–435 (IVTVTGISLCLFIIIATVLIT). The Cytoplasmic portion of the chain corresponds to 436 to 853 (LWRRFGRPAK…STLSVEKLVI (418 aa)). 4 disordered regions span residues 445–518 (KCST…ESFQ), 624–650 (TLIR…RNAH), 668–702 (ERSM…QSRG), and 714–800 (QEAS…RKDK). S464 carries the phosphoserine modification. Over residues 671 to 686 (MSTLTPRQAPAYSTRT) the composition is skewed to polar residues. The span at 687 to 697 (RTCEQAEDRFR) shows a compositional bias: basic and acidic residues. The segment covering 767–795 (SHKSVSRKQSSPTSPKDSYQRVSPLSPSQ) has biased composition (polar residues).

As to quaternary structure, part of a complex composed of THSD1, PTK2/FAK1, TLN1 and VCL. Interacts with TLN1.

It localises to the endosome membrane. Its subcellular location is the cell junction. The protein resides in the focal adhesion. In terms of biological role, is a positive regulator of nascent focal adhesion assembly, involved in the modulation of endothelial cell attachment to the extracellular matrix. In Pongo abelii (Sumatran orangutan), this protein is Thrombospondin type-1 domain-containing protein 1 (THSD1).